The sequence spans 391 residues: MDRVRPLAGGRNVRIREAVLNIDPYVPGKSKEEIAREYGIEPDEIVKLGSNENPLGPSPKAVKAAKRELERLHEYPEPLAPPSLYEAIIDYLADPPYPAGEPVEITREHLVVGGDGADEIIDVLTRVLVDPGDPVVIPVPTFSQYGISARACGAEVRKPRFDPERGFELDEDSLFEALDREVRLVYLCTPNNPTGNRIRERVVRDVVEECRGVVLIDHAYVEFADHDYTPLALEYDNVLVLRTCSKALGLAGARVGYGIANPELIEHLHRIKPVFSLTRPSAAAAEATFRDRDYIEKSVRLMIESRKYLYRELRKLDRLTPFPSEANYLLVDVSNTGMNASEFTEELLKRGVIVRDCSSFEGIEPFYVRVSTGTLEEDRKFIEVVKDVLEV.

Position 246 is an N6-(pyridoxal phosphate)lysine (Lys246).

It belongs to the class-II pyridoxal-phosphate-dependent aminotransferase family. Histidinol-phosphate aminotransferase subfamily. The cofactor is pyridoxal 5'-phosphate.

The enzyme catalyses L-histidinol phosphate + 2-oxoglutarate = 3-(imidazol-4-yl)-2-oxopropyl phosphate + L-glutamate. It participates in amino-acid biosynthesis; L-histidine biosynthesis; L-histidine from 5-phospho-alpha-D-ribose 1-diphosphate: step 7/9. In Methanopyrus kandleri (strain AV19 / DSM 6324 / JCM 9639 / NBRC 100938), this protein is Histidinol-phosphate aminotransferase.